A 79-amino-acid polypeptide reads, in one-letter code: uncharacterized protein (79 aa).

The protein belongs to the UPF0440 family.

This is an uncharacterized protein from Methanocella arvoryzae (strain DSM 22066 / NBRC 105507 / MRE50).